We begin with the raw amino-acid sequence, 469 residues long: 3-isopropylmalate dehydratase large subunit (469 aa).

Residues Cys-350, Cys-410, and Cys-413 each coordinate [4Fe-4S] cluster.

Belongs to the aconitase/IPM isomerase family. LeuC type 1 subfamily. As to quaternary structure, heterodimer of LeuC and LeuD. [4Fe-4S] cluster is required as a cofactor.

The enzyme catalyses (2R,3S)-3-isopropylmalate = (2S)-2-isopropylmalate. It functions in the pathway amino-acid biosynthesis; L-leucine biosynthesis; L-leucine from 3-methyl-2-oxobutanoate: step 2/4. Catalyzes the isomerization between 2-isopropylmalate and 3-isopropylmalate, via the formation of 2-isopropylmaleate. In Rhizobium meliloti (strain 1021) (Ensifer meliloti), this protein is 3-isopropylmalate dehydratase large subunit.